The following is a 258-amino-acid chain: Acetylglutamate kinase (258 aa).

Residues 41 to 42, R63, and N156 contribute to the substrate site; that span reads GG.

The protein belongs to the acetylglutamate kinase family. ArgB subfamily.

It is found in the cytoplasm. It catalyses the reaction N-acetyl-L-glutamate + ATP = N-acetyl-L-glutamyl 5-phosphate + ADP. The protein operates within amino-acid biosynthesis; L-arginine biosynthesis; N(2)-acetyl-L-ornithine from L-glutamate: step 2/4. In terms of biological role, catalyzes the ATP-dependent phosphorylation of N-acetyl-L-glutamate. The sequence is that of Acetylglutamate kinase from Bacillus pumilus (strain SAFR-032).